A 292-amino-acid polypeptide reads, in one-letter code: Bifunctional protein FolD 1 (292 aa).

An NADP(+)-binding site is contributed by 165 to 167; the sequence is GRS.

This sequence belongs to the tetrahydrofolate dehydrogenase/cyclohydrolase family. As to quaternary structure, homodimer.

It carries out the reaction (6R)-5,10-methylene-5,6,7,8-tetrahydrofolate + NADP(+) = (6R)-5,10-methenyltetrahydrofolate + NADPH. The catalysed reaction is (6R)-5,10-methenyltetrahydrofolate + H2O = (6R)-10-formyltetrahydrofolate + H(+). It functions in the pathway one-carbon metabolism; tetrahydrofolate interconversion. Its function is as follows. Catalyzes the oxidation of 5,10-methylenetetrahydrofolate to 5,10-methenyltetrahydrofolate and then the hydrolysis of 5,10-methenyltetrahydrofolate to 10-formyltetrahydrofolate. This chain is Bifunctional protein FolD 1, found in Myxococcus xanthus (strain DK1622).